The primary structure comprises 400 residues: 1-deoxy-D-xylulose 5-phosphate reductoisomerase (400 aa).

Positions 17, 18, 19, 20, and 131 each coordinate NADPH. K132 contacts 1-deoxy-D-xylulose 5-phosphate. An NADPH-binding site is contributed by E133. D157 is a Mn(2+) binding site. The 1-deoxy-D-xylulose 5-phosphate site is built by S158, E159, S188, and H211. E159 is a Mn(2+) binding site. G217 contacts NADPH. 1-deoxy-D-xylulose 5-phosphate contacts are provided by S224, N229, K230, and E233. E233 provides a ligand contact to Mn(2+).

Belongs to the DXR family. Mg(2+) serves as cofactor. It depends on Mn(2+) as a cofactor.

The catalysed reaction is 2-C-methyl-D-erythritol 4-phosphate + NADP(+) = 1-deoxy-D-xylulose 5-phosphate + NADPH + H(+). The protein operates within isoprenoid biosynthesis; isopentenyl diphosphate biosynthesis via DXP pathway; isopentenyl diphosphate from 1-deoxy-D-xylulose 5-phosphate: step 1/6. Functionally, catalyzes the NADPH-dependent rearrangement and reduction of 1-deoxy-D-xylulose-5-phosphate (DXP) to 2-C-methyl-D-erythritol 4-phosphate (MEP). This Pseudomonas putida (strain ATCC 700007 / DSM 6899 / JCM 31910 / BCRC 17059 / LMG 24140 / F1) protein is 1-deoxy-D-xylulose 5-phosphate reductoisomerase.